The chain runs to 222 residues: Protein-L-isoaspartate O-methyltransferase (222 aa).

Ser69 is a catalytic residue.

This sequence belongs to the methyltransferase superfamily. L-isoaspartyl/D-aspartyl protein methyltransferase family.

The protein resides in the cytoplasm. It catalyses the reaction [protein]-L-isoaspartate + S-adenosyl-L-methionine = [protein]-L-isoaspartate alpha-methyl ester + S-adenosyl-L-homocysteine. Functionally, catalyzes the methyl esterification of L-isoaspartyl residues in peptides and proteins that result from spontaneous decomposition of normal L-aspartyl and L-asparaginyl residues. It plays a role in the repair and/or degradation of damaged proteins. The sequence is that of Protein-L-isoaspartate O-methyltransferase from Nitrosomonas europaea (strain ATCC 19718 / CIP 103999 / KCTC 2705 / NBRC 14298).